The primary structure comprises 119 residues: Large ribosomal subunit protein uL24 (119 aa).

The protein belongs to the universal ribosomal protein uL24 family. In terms of assembly, part of the 50S ribosomal subunit.

In terms of biological role, one of two assembly initiator proteins, it binds directly to the 5'-end of the 23S rRNA, where it nucleates assembly of the 50S subunit. One of the proteins that surrounds the polypeptide exit tunnel on the outside of the subunit. The sequence is that of Large ribosomal subunit protein uL24 from Clavibacter sepedonicus (Clavibacter michiganensis subsp. sepedonicus).